We begin with the raw amino-acid sequence, 240 residues long: Phosphoribosylaminoimidazole-succinocarboxamide synthase (240 aa).

Belongs to the SAICAR synthetase family.

The enzyme catalyses 5-amino-1-(5-phospho-D-ribosyl)imidazole-4-carboxylate + L-aspartate + ATP = (2S)-2-[5-amino-1-(5-phospho-beta-D-ribosyl)imidazole-4-carboxamido]succinate + ADP + phosphate + 2 H(+). It functions in the pathway purine metabolism; IMP biosynthesis via de novo pathway; 5-amino-1-(5-phospho-D-ribosyl)imidazole-4-carboxamide from 5-amino-1-(5-phospho-D-ribosyl)imidazole-4-carboxylate: step 1/2. This chain is Phosphoribosylaminoimidazole-succinocarboxamide synthase, found in Neorickettsia sennetsu (strain ATCC VR-367 / Miyayama) (Ehrlichia sennetsu).